Here is a 147-residue protein sequence, read N- to C-terminus: SsrA-binding protein (147 aa).

The disordered stretch occupies residues 124–147 (KKHDKRQDIKDRDWARKQARQDFS). Positions 128–147 (KRQDIKDRDWARKQARQDFS) are enriched in basic and acidic residues.

Belongs to the SmpB family.

It is found in the cytoplasm. Its function is as follows. Required for rescue of stalled ribosomes mediated by trans-translation. Binds to transfer-messenger RNA (tmRNA), required for stable association of tmRNA with ribosomes. tmRNA and SmpB together mimic tRNA shape, replacing the anticodon stem-loop with SmpB. tmRNA is encoded by the ssrA gene; the 2 termini fold to resemble tRNA(Ala) and it encodes a 'tag peptide', a short internal open reading frame. During trans-translation Ala-aminoacylated tmRNA acts like a tRNA, entering the A-site of stalled ribosomes, displacing the stalled mRNA. The ribosome then switches to translate the ORF on the tmRNA; the nascent peptide is terminated with the 'tag peptide' encoded by the tmRNA and targeted for degradation. The ribosome is freed to recommence translation, which seems to be the essential function of trans-translation. This is SsrA-binding protein from Neorickettsia sennetsu (strain ATCC VR-367 / Miyayama) (Ehrlichia sennetsu).